The following is a 149-amino-acid chain: Small ribosomal subunit protein uS13 (149 aa).

This sequence belongs to the universal ribosomal protein uS13 family. Part of the 30S ribosomal subunit. Forms a loose heterodimer with protein S19. Forms two bridges to the 50S subunit in the 70S ribosome.

Located at the top of the head of the 30S subunit, it contacts several helices of the 16S rRNA. In the 70S ribosome it contacts the 23S rRNA (bridge B1a) and protein L5 of the 50S subunit (bridge B1b), connecting the 2 subunits; these bridges are implicated in subunit movement. The chain is Small ribosomal subunit protein uS13 from Thermococcus kodakarensis (strain ATCC BAA-918 / JCM 12380 / KOD1) (Pyrococcus kodakaraensis (strain KOD1)).